A 153-amino-acid polypeptide reads, in one-letter code: Superoxide dismutase [Cu-Zn] (153 aa).

Positions 45, 47, and 62 each coordinate Cu cation. C56 and C145 are disulfide-bonded. Zn(2+) contacts are provided by H62, H70, H79, and D82. H119 lines the Cu cation pocket.

It belongs to the Cu-Zn superoxide dismutase family. Homodimer. Requires Cu cation as cofactor. Zn(2+) serves as cofactor.

Its subcellular location is the cytoplasm. It carries out the reaction 2 superoxide + 2 H(+) = H2O2 + O2. Functionally, destroys radicals which are normally produced within the cells and which are toxic to biological systems. The polypeptide is Superoxide dismutase [Cu-Zn] (Drosophila virilis (Fruit fly)).